The sequence spans 111 residues: Probable 4-amino-4-deoxy-L-arabinose-phosphoundecaprenol flippase subunit ArnE (111 aa).

Topologically, residues 1 to 37 are cytoplasmic; it reads MIWLVLILASLLSVTGQLCQKQATRPVAINKRRKHIA. Residues 38–58 form a helical membrane-spanning segment; sequence LWLGLGLVCLGLAMVLWLLVL. Residues 40–109 enclose the EamA domain; that stretch reads LGLGLVCLGL…IIGGIVILGS (70 aa). Topologically, residues 59–60 are periplasmic; that stretch reads QT. A helical transmembrane segment spans residues 61 to 81; it reads VPVGIAYPMLSLNFVWVTLAA. Residues 82 to 87 lie on the Cytoplasmic side of the membrane; sequence TKLWHE. The chain crosses the membrane as a helical span at residues 88–108; the sequence is PVSFRHWCGVAFIIGGIVILG. The Periplasmic portion of the chain corresponds to 109 to 111; that stretch reads STV.

This sequence belongs to the ArnE family. Heterodimer of ArnE and ArnF.

It is found in the cell inner membrane. Its pathway is bacterial outer membrane biogenesis; lipopolysaccharide biosynthesis. Functionally, translocates 4-amino-4-deoxy-L-arabinose-phosphoundecaprenol (alpha-L-Ara4N-phosphoundecaprenol) from the cytoplasmic to the periplasmic side of the inner membrane. The polypeptide is Probable 4-amino-4-deoxy-L-arabinose-phosphoundecaprenol flippase subunit ArnE (Escherichia fergusonii (strain ATCC 35469 / DSM 13698 / CCUG 18766 / IAM 14443 / JCM 21226 / LMG 7866 / NBRC 102419 / NCTC 12128 / CDC 0568-73)).